Consider the following 209-residue polypeptide: Ribosomal RNA large subunit methyltransferase E (209 aa).

S-adenosyl-L-methionine contacts are provided by Gly63, Trp65, Asp83, Asp99, and Asp124. Lys164 acts as the Proton acceptor in catalysis.

The protein belongs to the class I-like SAM-binding methyltransferase superfamily. RNA methyltransferase RlmE family.

It is found in the cytoplasm. It catalyses the reaction uridine(2552) in 23S rRNA + S-adenosyl-L-methionine = 2'-O-methyluridine(2552) in 23S rRNA + S-adenosyl-L-homocysteine + H(+). In terms of biological role, specifically methylates the uridine in position 2552 of 23S rRNA at the 2'-O position of the ribose in the fully assembled 50S ribosomal subunit. This is Ribosomal RNA large subunit methyltransferase E from Vibrio parahaemolyticus serotype O3:K6 (strain RIMD 2210633).